The following is a 446-amino-acid chain: D-inositol 3-phosphate glycosyltransferase (446 aa).

Positions 1–21 (MSHYVGRLGRRSPAGSGRLRL) are disordered. 1D-myo-inositol 3-phosphate is bound at residue His34. UDP-N-acetyl-alpha-D-glucosamine contacts are provided by residues 40–41 (QP) and Gly48. 1D-myo-inositol 3-phosphate-binding positions include 45 to 50 (DAGGMN), Lys103, Tyr136, Thr160, and Arg180. Arg255, Lys260, and Val321 together coordinate UDP-N-acetyl-alpha-D-glucosamine. Residues Phe330, Arg331, and Ala333 each coordinate Mg(2+). UDP-N-acetyl-alpha-D-glucosamine contacts are provided by Glu343 and Glu351. Mg(2+) is bound at residue Thr357.

The protein belongs to the glycosyltransferase group 1 family. MshA subfamily. Homodimer.

It carries out the reaction 1D-myo-inositol 3-phosphate + UDP-N-acetyl-alpha-D-glucosamine = 1D-myo-inositol 2-acetamido-2-deoxy-alpha-D-glucopyranoside 3-phosphate + UDP + H(+). In terms of biological role, catalyzes the transfer of a N-acetyl-glucosamine moiety to 1D-myo-inositol 3-phosphate to produce 1D-myo-inositol 2-acetamido-2-deoxy-glucopyranoside 3-phosphate in the mycothiol biosynthesis pathway. The chain is D-inositol 3-phosphate glycosyltransferase from Streptomyces scabiei (strain 87.22).